Consider the following 152-residue polypeptide: Transcriptional repressor NrdR (152 aa).

Residues C3–C34 fold into a zinc finger. Positions P49–E139 constitute an ATP-cone domain.

Belongs to the NrdR family. Zn(2+) is required as a cofactor.

Its function is as follows. Negatively regulates transcription of bacterial ribonucleotide reductase nrd genes and operons by binding to NrdR-boxes. The sequence is that of Transcriptional repressor NrdR from Chromobacterium violaceum (strain ATCC 12472 / DSM 30191 / JCM 1249 / CCUG 213 / NBRC 12614 / NCIMB 9131 / NCTC 9757 / MK).